Consider the following 204-residue polypeptide: Methylthioribulose-1-phosphate dehydratase (204 aa).

Positions 94 and 96 each coordinate Zn(2+).

The protein belongs to the aldolase class II family. MtnB subfamily. Requires Zn(2+) as cofactor.

It catalyses the reaction 5-(methylsulfanyl)-D-ribulose 1-phosphate = 5-methylsulfanyl-2,3-dioxopentyl phosphate + H2O. It functions in the pathway amino-acid biosynthesis; L-methionine biosynthesis via salvage pathway; L-methionine from S-methyl-5-thio-alpha-D-ribose 1-phosphate: step 2/6. Catalyzes the dehydration of methylthioribulose-1-phosphate (MTRu-1-P) into 2,3-diketo-5-methylthiopentyl-1-phosphate (DK-MTP-1-P). This is Methylthioribulose-1-phosphate dehydratase from Serratia proteamaculans (strain 568).